The sequence spans 632 residues: MSSQEASKMLRTYNIAWWGNNYYDVNELGHISVCPDPDVPEARVDLAQLVKTREAQGQRLPALFCFPQILQHRLRSINAAFKRARESYGYNGDYFLVYPIKVNQHRRVIESLIHSGEPLGLEAGSKAELMAVLAHAGMTRSVIVCNGYKDREYIRLALIGEKMGHKVYLVIEKMSEIAIVLDEAERLNVVPRLGVRARLASQGSGKWQSSGGEKSKFGLAATQVLQLVETLREAGRLDSLQLLHFHLGSQMANIRDIATGVRESARFYVELHKLGVNIQCFDVGGGLGVDYEGTRSQSDCSVNYGLNEYANNIIWAIGDACEENGLPHPTVITESGRAVTAHHTVLVSNIIGVERNEYTVPTAPAEDAPRALQSMWETWQEMHEPGTRRSLREWLHDSQMDLHDIHIGYSSGTFSLQERAWAEQLYLSMCHEVQKQLDPQNRAHRPIIDELQERMADKMYVNFSLFQSMPDAWGIDQLFPVLPLEGLDQVPERRAVLLDITCDSDGAIDHYIDGDGIATTMPMPEYDPENPPMLGFFMVGAYQEILGNMHNLFGDTEAVDVFVFPDGSVEVELSDEGDTVADMLQYVQLDPKTLLTQFRDQVKKTDLDAELQQQFLEEFEAGLYGYTYLEDE.

Lysine 101 carries the post-translational modification N6-(pyridoxal phosphate)lysine. 281–291 (FDVGGGLGVDY) contacts substrate.

It belongs to the Orn/Lys/Arg decarboxylase class-II family. SpeA subfamily. The cofactor is Mg(2+). Requires pyridoxal 5'-phosphate as cofactor.

The enzyme catalyses L-arginine + H(+) = agmatine + CO2. The protein operates within amine and polyamine biosynthesis; agmatine biosynthesis; agmatine from L-arginine: step 1/1. Functionally, catalyzes the biosynthesis of agmatine from arginine. The sequence is that of Biosynthetic arginine decarboxylase from Escherichia coli O157:H7 (strain EC4115 / EHEC).